A 245-amino-acid polypeptide reads, in one-letter code: tRNA pseudouridine synthase A 2 (245 aa).

Asp-53 acts as the Nucleophile in catalysis. Tyr-111 serves as a coordination point for substrate.

This sequence belongs to the tRNA pseudouridine synthase TruA family. In terms of assembly, homodimer.

The enzyme catalyses uridine(38/39/40) in tRNA = pseudouridine(38/39/40) in tRNA. Formation of pseudouridine at positions 38, 39 and 40 in the anticodon stem and loop of transfer RNAs. The polypeptide is tRNA pseudouridine synthase A 2 (Bacillus cereus (strain ZK / E33L)).